The following is a 355-amino-acid chain: RNA 3'-terminal phosphate cyclase (355 aa).

ATP-binding positions include Gln109 and 291–295 (HLADQ). Residue His316 is the Tele-AMP-histidine intermediate of the active site.

It belongs to the RNA 3'-terminal cyclase family. Type 1 subfamily.

The protein localises to the cytoplasm. It catalyses the reaction a 3'-end 3'-phospho-ribonucleotide-RNA + ATP = a 3'-end 2',3'-cyclophospho-ribonucleotide-RNA + AMP + diphosphate. Its function is as follows. Catalyzes the conversion of 3'-phosphate to a 2',3'-cyclic phosphodiester at the end of RNA. The mechanism of action of the enzyme occurs in 3 steps: (A) adenylation of the enzyme by ATP; (B) transfer of adenylate to an RNA-N3'P to produce RNA-N3'PP5'A; (C) and attack of the adjacent 2'-hydroxyl on the 3'-phosphorus in the diester linkage to produce the cyclic end product. The biological role of this enzyme is unknown but it is likely to function in some aspects of cellular RNA processing. This chain is RNA 3'-terminal phosphate cyclase, found in Koribacter versatilis (strain Ellin345).